Reading from the N-terminus, the 383-residue chain is Cobalt-precorrin-5B C(1)-methyltransferase (383 aa).

Positions 1 to 24 (MQPSARRPFDLATPAPNGLRRGRT) are disordered.

Belongs to the CbiD family.

It carries out the reaction Co-precorrin-5B + S-adenosyl-L-methionine = Co-precorrin-6A + S-adenosyl-L-homocysteine. Its pathway is cofactor biosynthesis; adenosylcobalamin biosynthesis; cob(II)yrinate a,c-diamide from sirohydrochlorin (anaerobic route): step 6/10. Catalyzes the methylation of C-1 in cobalt-precorrin-5B to form cobalt-precorrin-6A. This chain is Cobalt-precorrin-5B C(1)-methyltransferase, found in Ralstonia nicotianae (strain ATCC BAA-1114 / GMI1000) (Ralstonia solanacearum).